The following is a 375-amino-acid chain: MSATDATQVISATTTTVKRFKGALIGCGFFSRNHLHAWRDIDGAEIVALCDADSERLRAAGQAFGIERLYRDAAAMLSAEQLDFVDIATTAPSHRSLVELAAQAGVAAICQKPFALTLADARAMVAACERAGVPLMVHENFRWQPAIQAVGRALRDGAIGTPFWGRVSFRSAFDVFSGQPYLARNERFIVEDLGIHILDIARFLFGDVTRLAAATSRVNSAIAGEDVATILLTHESGVTSVVDCSYASRQARELFPQTLVEVDGAEGTLRLSADYRLEIHNRDGTRTATAAPPPLAWASVPWEAIQASVVNIQRHWIACLRNGGEPQTSGRDNLKTLALVEATYLSAREGRTVELKSLEAEAPAVTSTSSGAVRR.

29 to 30 is an NAD(+) binding site; that stretch reads FF. Mg(2+) contacts are provided by tryptophan 38, arginine 39, isoleucine 41, and alanine 44. NAD(+)-binding positions include aspartate 51, serine 93, 111–112, asparagine 140, and 179–181; these read QK and QPY. Residue lysine 112 participates in substrate binding. Substrate is bound by residues glutamine 179, aspartate 192, histidine 196, and tyrosine 246.

Belongs to the Gfo/Idh/MocA family.

It catalyses the reaction D-apiofuranose + NAD(+) = D-apionolactone + NADH + H(+). The protein operates within carbohydrate metabolism. Functionally, involved in catabolism of D-apiose. Catalyzes oxidation of D-apiose to D-apionolactone. The sequence is that of D-apiose dehydrogenase from Paraburkholderia graminis (strain ATCC 700544 / DSM 17151 / LMG 18924 / NCIMB 13744 / C4D1M).